Reading from the N-terminus, the 120-residue chain is Large ribosomal subunit protein bL19 (120 aa).

This sequence belongs to the bacterial ribosomal protein bL19 family.

This protein is located at the 30S-50S ribosomal subunit interface and may play a role in the structure and function of the aminoacyl-tRNA binding site. The chain is Large ribosomal subunit protein bL19 (rplS) from Nostoc sp. (strain PCC 7120 / SAG 25.82 / UTEX 2576).